Reading from the N-terminus, the 128-residue chain is Ribosome-binding factor A (128 aa).

This sequence belongs to the RbfA family. As to quaternary structure, monomer. Binds 30S ribosomal subunits, but not 50S ribosomal subunits or 70S ribosomes.

The protein resides in the cytoplasm. Functionally, one of several proteins that assist in the late maturation steps of the functional core of the 30S ribosomal subunit. Associates with free 30S ribosomal subunits (but not with 30S subunits that are part of 70S ribosomes or polysomes). Required for efficient processing of 16S rRNA. May interact with the 5'-terminal helix region of 16S rRNA. The sequence is that of Ribosome-binding factor A from Haemophilus influenzae (strain ATCC 51907 / DSM 11121 / KW20 / Rd).